Reading from the N-terminus, the 102-residue chain is DRDATILKDDRTDNGDGNFHYSFETSNGIQDTKTGVPGSAGQSNMNGDFSFPLDDGSTASFTYVADENGYHVESPLLPSIPEYVQKQIDFAAEQRARGVIFD.

The Chitin-binding type R&amp;R domain occupies 16–81 (DGNFHYSFET…VESPLLPSIP (66 aa)). Positions 23–33 (FETSNGIQDTK) are enriched in polar residues. The interval 23–50 (FETSNGIQDTKTGVPGSAGQSNMNGDFS) is disordered.

As to expression, arthrodial membrane and calcified shell.

This chain is Cuticle protein AM/CP1114, found in Cancer pagurus (Rock crab).